Here is a 652-residue protein sequence, read N- to C-terminus: DNA ligase (652 aa).

NAD(+)-binding positions include 29 to 33 (DSDYD), 78 to 79 (SL), and E107. The active-site N6-AMP-lysine intermediate is the K109. NAD(+) contacts are provided by R130, E164, K278, and K302. Residues C395, C398, C413, and C418 each contribute to the Zn(2+) site. The BRCT domain occupies 577–652 (NSDAALFGLT…IEDEDWLRQL (76 aa)).

The protein belongs to the NAD-dependent DNA ligase family. LigA subfamily. Mg(2+) is required as a cofactor. Requires Mn(2+) as cofactor.

The enzyme catalyses NAD(+) + (deoxyribonucleotide)n-3'-hydroxyl + 5'-phospho-(deoxyribonucleotide)m = (deoxyribonucleotide)n+m + AMP + beta-nicotinamide D-nucleotide.. In terms of biological role, DNA ligase that catalyzes the formation of phosphodiester linkages between 5'-phosphoryl and 3'-hydroxyl groups in double-stranded DNA using NAD as a coenzyme and as the energy source for the reaction. It is essential for DNA replication and repair of damaged DNA. In Streptococcus pyogenes serotype M12 (strain MGAS2096), this protein is DNA ligase.